The following is a 798-amino-acid chain: Pentatricopeptide repeat-containing protein At5g67570, chloroplastic (798 aa).

Disordered stretches follow at residues 1–21 and 50–73; these read MDAS…EFEP and IQKH…EAQK. 10 PPR repeats span residues 254–284, 290–324, 340–374, 375–409, 410–444, 445–480, 481–511, 515–545, 553–587, and 588–622; these read SRFV…MLGD, DMAA…PTKL, DLVV…GLRP, NGAT…GEAP, KAIT…GVIG, TGSV…NCRP, LEIT…MKDK, NIGT…IVSR, NEYT…GYQM, and DQTK…GEIP.

It belongs to the PPR family. P subfamily. In terms of assembly, interacts (via C-terminus) with SIGF (via N-terminus).

Its subcellular location is the plastid. The protein localises to the chloroplast. Its function is as follows. Involved in the regulation of early chloroplast development and chloroplast gene expression in a SIGF-dependent manner. In Arabidopsis thaliana (Mouse-ear cress), this protein is Pentatricopeptide repeat-containing protein At5g67570, chloroplastic (DG1).